We begin with the raw amino-acid sequence, 724 residues long: Ribosomal RNA large subunit methyltransferase K/L (724 aa).

The THUMP domain occupies 42 to 153; that stretch reads DAQRLVLWSR…KGRATLSVDL (112 aa).

The protein belongs to the methyltransferase superfamily. RlmKL family.

It localises to the cytoplasm. It carries out the reaction guanosine(2445) in 23S rRNA + S-adenosyl-L-methionine = N(2)-methylguanosine(2445) in 23S rRNA + S-adenosyl-L-homocysteine + H(+). The enzyme catalyses guanosine(2069) in 23S rRNA + S-adenosyl-L-methionine = N(2)-methylguanosine(2069) in 23S rRNA + S-adenosyl-L-homocysteine + H(+). Specifically methylates the guanine in position 2445 (m2G2445) and the guanine in position 2069 (m7G2069) of 23S rRNA. The protein is Ribosomal RNA large subunit methyltransferase K/L of Xylella fastidiosa (strain M23).